The following is a 354-amino-acid chain: Guanine nucleotide-binding protein G(i) subunit alpha-1 (354 aa).

A lipid anchor (N-myristoyl glycine) is attached at G2. C3 is lipidated: S-palmitoyl cysteine. In terms of domain architecture, G-alpha spans 32–354 (REVKLLLLGA…KNNLKDCGLF (323 aa)). The G1 motif stretch occupies residues 35–48 (KLLLLGAGESGKST). GTP contacts are provided by residues 43 to 48 (ESGKST), 150 to 151 (DS), and 175 to 178 (LRTR). Mg(2+) is bound at residue S47. The tract at residues 173-181 (DVLRTRVKT) is G2 motif. T181 provides a ligand contact to Mg(2+). The interval 196–205 (FKMFDVGGQR) is G3 motif. Residues 200–204 (DVGGQ), 269–272 (NKKD), and A326 contribute to the GTP site. Positions 265–272 (ILFLNKKD) are G4 motif. The tract at residues 324 to 329 (TCATDT) is G5 motif.

The protein belongs to the G-alpha family. G(i/o/t/z) subfamily. As to quaternary structure, heterotrimeric G proteins are composed of 3 units; alpha, beta and gamma. The alpha chain contains the guanine nucleotide binding site. Part of a spindle orientation complex. Identified in complex with the beta subunit GNB1 and the gamma subunit GNG1. Identified in complex with the beta subunit GNB1 and the gamma subunit GNG2. GTP binding causes dissociation of the heterotrimer, liberating the individual subunits so that they can interact with downstream effector proteins. In terms of processing, myristoylation at Gly-2 is required for membrane anchoring before palmitoylation. Palmitoylation at Cys-3 varies with membrane lipid composition.

Its subcellular location is the nucleus. The protein resides in the cytoplasm. It is found in the cell membrane. The protein localises to the cytoskeleton. It localises to the microtubule organizing center. Its subcellular location is the centrosome. The protein resides in the cell cortex. It is found in the membrane. It catalyses the reaction GTP + H2O = GDP + phosphate + H(+). In terms of biological role, guanine nucleotide-binding proteins (G proteins) function as transducers downstream of G protein-coupled receptors (GPCRs) in numerous signaling cascades. The alpha chain contains the guanine nucleotide binding site and alternates between an active, GTP-bound state and an inactive, GDP-bound state. Signaling by an activated GPCR promotes GDP release and GTP binding. The alpha subunit has a low GTPase activity that converts bound GTP to GDP, thereby terminating the signal. Both GDP release and GTP hydrolysis are modulated by numerous regulatory proteins. Signaling is mediated via effector proteins, such as adenylate cyclase. Inhibits adenylate cyclase activity, leading to decreased intracellular cAMP levels. Required for cortical dynein-dynactin complex recruitment during metaphase. This Xenopus laevis (African clawed frog) protein is Guanine nucleotide-binding protein G(i) subunit alpha-1 (gnai1).